The sequence spans 498 residues: ATP synthase subunit beta, chloroplastic (498 aa).

An ATP-binding site is contributed by 172 to 179 (GGAGVGKT).

This sequence belongs to the ATPase alpha/beta chains family. As to quaternary structure, F-type ATPases have 2 components, CF(1) - the catalytic core - and CF(0) - the membrane proton channel. CF(1) has five subunits: alpha(3), beta(3), gamma(1), delta(1), epsilon(1). CF(0) has four main subunits: a(1), b(1), b'(1) and c(9-12).

The protein resides in the plastid. Its subcellular location is the chloroplast thylakoid membrane. It catalyses the reaction ATP + H2O + 4 H(+)(in) = ADP + phosphate + 5 H(+)(out). Produces ATP from ADP in the presence of a proton gradient across the membrane. The catalytic sites are hosted primarily by the beta subunits. The chain is ATP synthase subunit beta, chloroplastic from Phormium tenax (New Zealand flax).